The sequence spans 419 residues: UDP-arabinose 4-epimerase 1 (419 aa).

The interval 1–21 (MFSFGRARSQGRQNRSMSLGG) is disordered. At 1–32 (MFSFGRARSQGRQNRSMSLGGLDYADPKKKNN) the chain is on the cytoplasmic side. The chain crosses the membrane as a helical; Signal-anchor for type II membrane protein span at residues 33 to 51 (YLGKILLTASLTALCIFML). Residues 52 to 419 (KQSPTFNTPS…GLTTSSVSVY (368 aa)) are Lumenal-facing. An NAD(+)-binding site is contributed by 72-103 (HVLVTGGAGYIGSHAALRLLKESYRVTIVDNL). Tyr-220 acts as the Proton acceptor in catalysis.

Belongs to the NAD(P)-dependent epimerase/dehydratase family. The cofactor is NAD(+). High expression in roots. Also found in leaves, stems, flowers, and siliques.

The protein localises to the golgi apparatus. The protein resides in the golgi stack membrane. The catalysed reaction is UDP-beta-L-arabinopyranose = UDP-alpha-D-xylose. It participates in nucleotide-sugar biosynthesis; UDP-L-arabinose biosynthesis; UDP-L-arabinose from UDP-alpha-D-xylose: step 1/1. The protein operates within cell wall biogenesis; cell wall polysaccharide biosynthesis. In terms of biological role, acts as a UDP-D-xylose 4-epimerase but lacks both UDP-D-glucose and UDP-D-glucuronic acid 4-epimerase activities in vitro. The chain is UDP-arabinose 4-epimerase 1 from Arabidopsis thaliana (Mouse-ear cress).